A 338-amino-acid chain; its full sequence is Phenylalanine--tRNA ligase alpha subunit (338 aa).

A Mg(2+)-binding site is contributed by Glu-253.

This sequence belongs to the class-II aminoacyl-tRNA synthetase family. Phe-tRNA synthetase alpha subunit type 1 subfamily. In terms of assembly, tetramer of two alpha and two beta subunits. Mg(2+) serves as cofactor.

It is found in the cytoplasm. The enzyme catalyses tRNA(Phe) + L-phenylalanine + ATP = L-phenylalanyl-tRNA(Phe) + AMP + diphosphate + H(+). This chain is Phenylalanine--tRNA ligase alpha subunit, found in Legionella pneumophila (strain Paris).